Here is a 213-residue protein sequence, read N- to C-terminus: MEEQGRCACRLEDRPHYEEMVLETMLYSARLKERVARENSAVIVAMSRLMAETFEGGGRVLFCGNGGSAADAQHLATELTIRYRSSVQRPALAAIALSSDSMALTAGANDLGYDAVFARLVEAYGREGDLLVGISTSGNSQSVANAFMAAQERGLKCIALLGGDGGAMKGKADLEIVVPHTGSADRVQECHIAIGHVIIDLVERMLGYCTSSR.

Residues 50-208 (MAETFEGGGR…IDLVERMLGY (159 aa)) form the SIS domain. A substrate-binding site is contributed by 65–67 (NGG). The Zn(2+) site is built by His-74 and Glu-78. Substrate is bound by residues Glu-78, 109–110 (ND), 135–137 (STS), Ser-140, and Gln-188. Zn(2+) contacts are provided by Gln-188 and His-196.

Belongs to the SIS family. GmhA subfamily. It depends on Zn(2+) as a cofactor.

The protein localises to the cytoplasm. It carries out the reaction 2 D-sedoheptulose 7-phosphate = D-glycero-alpha-D-manno-heptose 7-phosphate + D-glycero-beta-D-manno-heptose 7-phosphate. It participates in carbohydrate biosynthesis; D-glycero-D-manno-heptose 7-phosphate biosynthesis; D-glycero-alpha-D-manno-heptose 7-phosphate and D-glycero-beta-D-manno-heptose 7-phosphate from sedoheptulose 7-phosphate: step 1/1. Functionally, catalyzes the isomerization of sedoheptulose 7-phosphate in D-glycero-D-manno-heptose 7-phosphate. This is Phosphoheptose isomerase from Chlorobium phaeovibrioides (strain DSM 265 / 1930) (Prosthecochloris vibrioformis (strain DSM 265)).